A 635-amino-acid polypeptide reads, in one-letter code: 1-deoxy-D-xylulose-5-phosphate synthase (635 aa).

Thiamine diphosphate is bound by residues His72 and 113–115 (GHA). Asp144 lines the Mg(2+) pocket. Residues 145–146 (GA), Asn174, Tyr287, and Glu370 each bind thiamine diphosphate. Asn174 provides a ligand contact to Mg(2+).

The protein belongs to the transketolase family. DXPS subfamily. As to quaternary structure, homodimer. Requires Mg(2+) as cofactor. The cofactor is thiamine diphosphate.

The enzyme catalyses D-glyceraldehyde 3-phosphate + pyruvate + H(+) = 1-deoxy-D-xylulose 5-phosphate + CO2. It functions in the pathway metabolic intermediate biosynthesis; 1-deoxy-D-xylulose 5-phosphate biosynthesis; 1-deoxy-D-xylulose 5-phosphate from D-glyceraldehyde 3-phosphate and pyruvate: step 1/1. Its function is as follows. Catalyzes the acyloin condensation reaction between C atoms 2 and 3 of pyruvate and glyceraldehyde 3-phosphate to yield 1-deoxy-D-xylulose-5-phosphate (DXP). The protein is 1-deoxy-D-xylulose-5-phosphate synthase of Trichodesmium erythraeum (strain IMS101).